Consider the following 450-residue polypeptide: MASLNLGFSGARKKAAARIRAVERRNLITVCRFSVKTLIDRSCFETIDDTSAEFINFVSILEHILSHRLKGQVSWFGYESPRSFWDFIRMACSKVPHSCIHSIENMENVRSSRAKGRAWIRVALMEKRLSEYISAALRDFKTTRRFYEEGALLLGEEAGLLADTLIGLNAIDFSFCLKGEGLDEDCPVVIDYTPYLKFTQTSDSISSDEEEMRTLGSSGSEAGTPESHMAASLMADQSSWFSKSKRLEQKYRVVLEQRGYLEELVRLREAQLSESVSQNKALLQRLTDTEISHKLEKEQLEIIILELQDQLTVLKNHDLRSRQELTSHLTNQWPSPGALDGNAVALDTLLYRKRTGPWEEKSFPSLEQLSADMSLSQTSLDPVQLNTHSLDSKAGLAHWHREGKEDTPSLRGLCGSLTSMASYKSLASLKSSEYLASPTTDMTSPGLTPS.

Residues 48 to 180 (DDTSAEFINF…IDFSFCLKGE (133 aa)) form the RUN domain. The tract at residues 203–225 (DSISSDEEEMRTLGSSGSEAGTP) is disordered. Residues 291–317 (ISHKLEKEQLEIIILELQDQLTVLKNH) adopt a coiled-coil conformation.

Belongs to the RUNDC3 family.

In Danio rerio (Zebrafish), this protein is RUN domain-containing protein 3B (rundc3b).